A 167-amino-acid chain; its full sequence is Protein-export protein SecB (167 aa).

It belongs to the SecB family. Homotetramer, a dimer of dimers. One homotetramer interacts with 1 SecA dimer.

The protein resides in the cytoplasm. One of the proteins required for the normal export of preproteins out of the cell cytoplasm. It is a molecular chaperone that binds to a subset of precursor proteins, maintaining them in a translocation-competent state. It also specifically binds to its receptor SecA. This chain is Protein-export protein SecB, found in Wolbachia sp. subsp. Brugia malayi (strain TRS).